The primary structure comprises 156 residues: Deoxyuridine 5'-triphosphate nucleotidohydrolase (156 aa).

Residues 76–78, Asn-89, 93–95, and Lys-103 contribute to the substrate site; these read RSG and TVD.

Belongs to the dUTPase family. Mg(2+) is required as a cofactor.

The enzyme catalyses dUTP + H2O = dUMP + diphosphate + H(+). The protein operates within pyrimidine metabolism; dUMP biosynthesis; dUMP from dCTP (dUTP route): step 2/2. Functionally, this enzyme is involved in nucleotide metabolism: it produces dUMP, the immediate precursor of thymidine nucleotides and it decreases the intracellular concentration of dUTP so that uracil cannot be incorporated into DNA. This is Deoxyuridine 5'-triphosphate nucleotidohydrolase from Rhizobium johnstonii (strain DSM 114642 / LMG 32736 / 3841) (Rhizobium leguminosarum bv. viciae).